A 478-amino-acid chain; its full sequence is Sulfate adenylyltransferase subunit 1 (478 aa).

Residues 24 to 240 (KSLLRFLTCG…VLENVDIDAD (217 aa)) form the tr-type G domain. A G1 region spans residues 33 to 40 (GSVDDGKS). 33–40 (GSVDDGKS) lines the GTP pocket. The interval 91-95 (GITID) is G2. Positions 112 to 115 (DTPG) are G3. GTP contacts are provided by residues 112 to 116 (DTPGH) and 167 to 170 (NKMD). A G4 region spans residues 167 to 170 (NKMD). Positions 206–208 (SAL) are G5.

Belongs to the TRAFAC class translation factor GTPase superfamily. Classic translation factor GTPase family. CysN/NodQ subfamily. Heterodimer composed of CysD, the smaller subunit, and CysN.

It carries out the reaction sulfate + ATP + H(+) = adenosine 5'-phosphosulfate + diphosphate. Its pathway is sulfur metabolism; hydrogen sulfide biosynthesis; sulfite from sulfate: step 1/3. Its function is as follows. With CysD forms the ATP sulfurylase (ATPS) that catalyzes the adenylation of sulfate producing adenosine 5'-phosphosulfate (APS) and diphosphate, the first enzymatic step in sulfur assimilation pathway. APS synthesis involves the formation of a high-energy phosphoric-sulfuric acid anhydride bond driven by GTP hydrolysis by CysN coupled to ATP hydrolysis by CysD. This is Sulfate adenylyltransferase subunit 1 from Aliivibrio fischeri (strain MJ11) (Vibrio fischeri).